A 334-amino-acid chain; its full sequence is Anthranilate phosphoribosyltransferase (334 aa).

Residues G79, 82–83 (GD), S87, 89–92 (NIST), 107–115 (KHGNRSISS), and S119 contribute to the 5-phospho-alpha-D-ribose 1-diphosphate site. Position 79 (G79) interacts with anthranilate. S91 provides a ligand contact to Mg(2+). Residue N110 participates in anthranilate binding. Anthranilate is bound at residue R165. Positions 224 and 225 each coordinate Mg(2+).

This sequence belongs to the anthranilate phosphoribosyltransferase family. Homodimer. Mg(2+) is required as a cofactor.

The enzyme catalyses N-(5-phospho-beta-D-ribosyl)anthranilate + diphosphate = 5-phospho-alpha-D-ribose 1-diphosphate + anthranilate. The protein operates within amino-acid biosynthesis; L-tryptophan biosynthesis; L-tryptophan from chorismate: step 2/5. In terms of biological role, catalyzes the transfer of the phosphoribosyl group of 5-phosphorylribose-1-pyrophosphate (PRPP) to anthranilate to yield N-(5'-phosphoribosyl)-anthranilate (PRA). In Streptococcus pneumoniae serotype 19F (strain G54), this protein is Anthranilate phosphoribosyltransferase.